The sequence spans 113 residues: U11-theraphotoxin-Hhn1a (113 aa).

A signal peptide spans 1–21 (MDTVRVAFLLVLVLAVSLGQA). The propeptide occupies 22–74 (DKDENRMEMQEKTEQGKSYLDFAENLLLQKLEELEAKLLEEDSEESRNSRQKR). A compositionally biased stretch (basic and acidic residues) spans 60-69 (LEEDSEESRN). The interval 60 to 83 (LEEDSEESRNSRQKRCIGEGVPCD) is disordered. 3 disulfide bridges follow: cysteine 75–cysteine 90, cysteine 82–cysteine 95, and cysteine 89–cysteine 110.

Belongs to the neurotoxin 14 (magi-1) family. 01 (HNTX-16) subfamily. Expressed by the venom gland.

It localises to the secreted. Functionally, probable ion channel inhibitor. This is U11-theraphotoxin-Hhn1a from Cyriopagopus hainanus (Chinese bird spider).